The chain runs to 260 residues: tRNA1(Val) (adenine(37)-N6)-methyltransferase (260 aa).

It belongs to the methyltransferase superfamily. tRNA (adenine-N(6)-)-methyltransferase family.

The protein localises to the cytoplasm. It carries out the reaction adenosine(37) in tRNA1(Val) + S-adenosyl-L-methionine = N(6)-methyladenosine(37) in tRNA1(Val) + S-adenosyl-L-homocysteine + H(+). Functionally, specifically methylates the adenine in position 37 of tRNA(1)(Val) (anticodon cmo5UAC). The chain is tRNA1(Val) (adenine(37)-N6)-methyltransferase from Serratia proteamaculans (strain 568).